Reading from the N-terminus, the 335-residue chain is Endo-beta-N-acetylglucosaminidase F2 (335 aa).

The N-terminal stretch at 1–45 (MKTANFSFALCLSVVIMLFIKCTRSEQDLSVTKDAIAQKSGVTVS) is a signal peptide. Positions 61-321 (QISAGYYRTW…SSNDNTLRAP (261 aa)) constitute a GH18 domain. O-linked (Man...) serine glycans are attached at residues Ser73, Ser89, and Ser143. The active-site Proton donor is the Glu171.

Belongs to the glycosyl hydrolase 18 family. Monomer. Post-translationally, carbohydrates at Ser-73, Ser-89 and Ser-143 consist of (2-OMe)Man1-4GlcNAcU1-4GlcU1-4Glc1-4(2-OMe)GlcU1-4[(2-OMe)Rham1-2]Man.

The protein resides in the secreted. It carries out the reaction an N(4)-(oligosaccharide-(1-&gt;3)-[oligosaccharide-(1-&gt;6)]-beta-D-Man-(1-&gt;4)-beta-D-GlcNAc-(1-&gt;4)-alpha-D-GlcNAc)-L-asparaginyl-[protein] + H2O = an oligosaccharide-(1-&gt;3)-[oligosaccharide-(1-&gt;6)]-beta-D-Man-(1-&gt;4)-D-GlcNAc + N(4)-(N-acetyl-beta-D-glucosaminyl)-L-asparaginyl-[protein]. Its function is as follows. Endohydrolysis of the di-N-acetylchitobiosyl unit in high-mannose glycopeptides and glycoproteins. Complex biantennary glycans are the preferred substrates. Tri- and tetraantennary glycans are not hydrolyzed, and high mannose glycans are very poor substrates. In Elizabethkingia meningoseptica (Chryseobacterium meningosepticum), this protein is Endo-beta-N-acetylglucosaminidase F2 (endOF2).